Consider the following 804-residue polypeptide: Protein translocase subunit SecA (804 aa).

ATP is bound by residues Gln-87, Gly-105–Thr-109, and Asp-500.

This sequence belongs to the SecA family. As to quaternary structure, monomer and homodimer. Part of the essential Sec protein translocation apparatus which comprises SecA, SecYEG and auxiliary proteins SecDF-YajC and YidC.

It is found in the cell inner membrane. The protein localises to the cytoplasm. It catalyses the reaction ATP + H2O + cellular proteinSide 1 = ADP + phosphate + cellular proteinSide 2.. Its function is as follows. Part of the Sec protein translocase complex. Interacts with the SecYEG preprotein conducting channel. Has a central role in coupling the hydrolysis of ATP to the transfer of proteins into and across the cell membrane, serving both as a receptor for the preprotein-SecB complex and as an ATP-driven molecular motor driving the stepwise translocation of polypeptide chains across the membrane. The chain is Protein translocase subunit SecA from Neorickettsia sennetsu (strain ATCC VR-367 / Miyayama) (Ehrlichia sennetsu).